The following is an 85-amino-acid chain: U4-theraphotoxin-Hhn1ad (85 aa).

A signal peptide spans 1 to 22 (MKVTLIAILTCAAVLVLHTTAA). Positions 23–48 (EELKTESQLMEVGMPDTELATVDEER) are excised as a propeptide. 3 cysteine pairs are disulfide-bonded: cysteine 52–cysteine 66, cysteine 56–cysteine 77, and cysteine 71–cysteine 82.

The protein belongs to the neurotoxin 12 (Hwtx-2) family. 02 (Hwtx-2) subfamily. Expressed by the venom gland.

It localises to the secreted. In terms of biological role, postsynaptic neurotoxin. The sequence is that of U4-theraphotoxin-Hhn1ad from Cyriopagopus hainanus (Chinese bird spider).